We begin with the raw amino-acid sequence, 176 residues long: ATP-dependent protease subunit HslV (176 aa).

The active site involves Thr-6. The Na(+) site is built by Ser-161, Cys-164, and Thr-167.

It belongs to the peptidase T1B family. HslV subfamily. A double ring-shaped homohexamer of HslV is capped on each side by a ring-shaped HslU homohexamer. The assembly of the HslU/HslV complex is dependent on binding of ATP.

It is found in the cytoplasm. It catalyses the reaction ATP-dependent cleavage of peptide bonds with broad specificity.. Allosterically activated by HslU binding. Protease subunit of a proteasome-like degradation complex believed to be a general protein degrading machinery. This is ATP-dependent protease subunit HslV from Thermosipho melanesiensis (strain DSM 12029 / CIP 104789 / BI429).